A 271-amino-acid chain; its full sequence is Thiazole synthase (271 aa).

K104 (schiff-base intermediate with DXP) is an active-site residue. 1-deoxy-D-xylulose 5-phosphate contacts are provided by residues G165, A192–G193, and N214–T215.

Belongs to the ThiG family. In terms of assembly, homotetramer. Forms heterodimers with either ThiH or ThiS.

The protein resides in the cytoplasm. The catalysed reaction is [ThiS sulfur-carrier protein]-C-terminal-Gly-aminoethanethioate + 2-iminoacetate + 1-deoxy-D-xylulose 5-phosphate = [ThiS sulfur-carrier protein]-C-terminal Gly-Gly + 2-[(2R,5Z)-2-carboxy-4-methylthiazol-5(2H)-ylidene]ethyl phosphate + 2 H2O + H(+). The protein operates within cofactor biosynthesis; thiamine diphosphate biosynthesis. Catalyzes the rearrangement of 1-deoxy-D-xylulose 5-phosphate (DXP) to produce the thiazole phosphate moiety of thiamine. Sulfur is provided by the thiocarboxylate moiety of the carrier protein ThiS. In vitro, sulfur can be provided by H(2)S. This Burkholderia mallei (strain ATCC 23344) protein is Thiazole synthase.